A 385-amino-acid polypeptide reads, in one-letter code: Spermidine/putrescine import ATP-binding protein PotA (385 aa).

In terms of domain architecture, ABC transporter spans 6–238; that stretch reads IEFKNVSKVF…PINHFVATFI (233 aa). Residue 40 to 47 participates in ATP binding; sequence GASGSGKS.

It belongs to the ABC transporter superfamily. Spermidine/putrescine importer (TC 3.A.1.11.1) family. The complex is composed of two ATP-binding proteins (PotA), two transmembrane proteins (PotB and PotC) and a solute-binding protein (PotD).

It localises to the cell membrane. It carries out the reaction ATP + H2O + polyamine-[polyamine-binding protein]Side 1 = ADP + phosphate + polyamineSide 2 + [polyamine-binding protein]Side 1.. Part of the ABC transporter complex PotABCD involved in spermidine/putrescine import. Responsible for energy coupling to the transport system. The protein is Spermidine/putrescine import ATP-binding protein PotA of Streptococcus pneumoniae serotype 4 (strain ATCC BAA-334 / TIGR4).